Here is a 583-residue protein sequence, read N- to C-terminus: Bifunctional dihydrofolate reductase-thymidylate synthase (583 aa).

One can recognise a DHFR domain in the interval 9 to 229 (DIYAICACCK…TTLDFVIYSK (221 aa)). 36 to 42 (GLGNEGG) contributes to the NADP(+) binding site. Asp51 is a binding site for substrate. NADP(+) contacts are provided by residues 104 to 106 (KAS) and 125 to 128 (LSRT). 3 residues coordinate substrate: Ile165, Tyr171, and Thr186. An NADP(+)-binding site is contributed by 166–173 (GGASVYKE). Positions 298 to 583 (HPEYQYLNII…HDKISMDMAA (286 aa)) are thymidylate synthase. Arg320 serves as a coordination point for dUMP. Cys465 is a catalytic residue. Residues His466, 484–488 (QRSCD), Asn496, and 526–528 (HVY) contribute to the dUMP site.

This sequence in the N-terminal section; belongs to the dihydrofolate reductase family. The protein in the C-terminal section; belongs to the thymidylate synthase family. Homodimer.

It carries out the reaction (6S)-5,6,7,8-tetrahydrofolate + NADP(+) = 7,8-dihydrofolate + NADPH + H(+). The enzyme catalyses dUMP + (6R)-5,10-methylene-5,6,7,8-tetrahydrofolate = 7,8-dihydrofolate + dTMP. It functions in the pathway cofactor biosynthesis; tetrahydrofolate biosynthesis; 5,6,7,8-tetrahydrofolate from 7,8-dihydrofolate: step 1/1. Its function is as follows. Bifunctional enzyme. Involved in de novo dTMP biosynthesis. Key enzyme in folate metabolism. Catalyzes an essential reaction for de novo glycine and purine synthesis, DNA precursor synthesis, and for the conversion of dUMP to dTMP. The sequence is that of Bifunctional dihydrofolate reductase-thymidylate synthase from Plasmodium chabaudi.